Here is a 360-residue protein sequence, read N- to C-terminus: Phospho-N-acetylmuramoyl-pentapeptide-transferase (360 aa).

10 consecutive transmembrane segments (helical) span residues 21-41 (YLTF…LWIG), 73-93 (TMGG…WGDL), 94-114 (SNPY…IGFV), 132-152 (WKYF…YALG), 168-188 (IMPQ…VGTS), 199-219 (GLAI…AWAT), 239-259 (LVIF…FNTY), 263-283 (VFMG…IAVL), 288-308 (FLLV…ILQV), and 338-358 (VIIR…VTLK).

This sequence belongs to the glycosyltransferase 4 family. MraY subfamily. Mg(2+) serves as cofactor.

The protein localises to the cell inner membrane. The enzyme catalyses UDP-N-acetyl-alpha-D-muramoyl-L-alanyl-gamma-D-glutamyl-meso-2,6-diaminopimeloyl-D-alanyl-D-alanine + di-trans,octa-cis-undecaprenyl phosphate = di-trans,octa-cis-undecaprenyl diphospho-N-acetyl-alpha-D-muramoyl-L-alanyl-D-glutamyl-meso-2,6-diaminopimeloyl-D-alanyl-D-alanine + UMP. The protein operates within cell wall biogenesis; peptidoglycan biosynthesis. Its function is as follows. Catalyzes the initial step of the lipid cycle reactions in the biosynthesis of the cell wall peptidoglycan: transfers peptidoglycan precursor phospho-MurNAc-pentapeptide from UDP-MurNAc-pentapeptide onto the lipid carrier undecaprenyl phosphate, yielding undecaprenyl-pyrophosphoryl-MurNAc-pentapeptide, known as lipid I. This Mannheimia succiniciproducens (strain KCTC 0769BP / MBEL55E) protein is Phospho-N-acetylmuramoyl-pentapeptide-transferase.